The sequence spans 647 residues: CRE-binding bZIP protein SKO1 (647 aa).

Disordered regions lie at residues 1 to 119, 135 to 204, 305 to 331, and 353 to 429; these read MSSE…GSKR, STTN…QMPG, TPTT…TSTK, and KENE…EEQE. The segment covering 51-85 has biased composition (polar residues); that stretch reads RNNSTSTITQHSQRSTHSLNSIPEENGNSTVTDNS. S94 is modified (phosphoserine). A Phosphothreonine modification is found at T113. Low complexity-rich tracts occupy residues 138-194 and 305-329; these read NPSQ…SGNG and TPTT…PNTS. Polar residues-rich tracts occupy residues 357–368 and 396–405; these read NLTTQIENNDQF and RKNSAVTTAP. S399 carries the post-translational modification Phosphoserine. The 64-residue stretch at 429-492 folds into the bZIP domain; sequence ERKRKEFLER…PSSSSNSQFN (64 aa). A basic motif region spans residues 430–451; it reads RKRKEFLERNRVAASKFRKRKK. The segment at 454–461 is leucine-zipper; sequence IKKIENDL. Phosphoserine is present on S558.

Belongs to the bZIP family.

It is found in the nucleus. Its function is as follows. Binds to the CRE motif 5'-TGACGTCA-3' and acts as a repressor of transcription of the SUC2 gene and most probably other genes. The chain is CRE-binding bZIP protein SKO1 (SKO1) from Saccharomyces cerevisiae (strain ATCC 204508 / S288c) (Baker's yeast).